Here is a 654-residue protein sequence, read N- to C-terminus: Myrosinase-binding protein 2 (654 aa).

Jacalin-type lectin domains follow at residues 2–151 (SEKV…HFFA), 156–291 (LKHF…HFAP), 346–489 (PNKV…YFAP), and 502–645 (AKKL…HAVP). Pro residues predominate over residues 314-346 (VPAPSPAPAPSPAPAPAPAPAPAPTPAPAPAPP). Positions 314 to 355 (VPAPSPAPAPSPAPAPAPAPAPAPTPAPAPAPPNKVEALGGN) are disordered.

This sequence belongs to the jacalin lectin family. Expressed in flowers. Detected mainly in ovules and styles of immature flowers, but also in pistils, styles, stamens, petals and embryos. Not detected in leaves.

This chain is Myrosinase-binding protein 2 (MBP2), found in Arabidopsis thaliana (Mouse-ear cress).